A 239-amino-acid polypeptide reads, in one-letter code: Ribosomal RNA small subunit methyltransferase G (239 aa).

Residues Gly-78, Phe-83, 129–130 (AE), and Arg-148 each bind S-adenosyl-L-methionine.

The protein belongs to the methyltransferase superfamily. RNA methyltransferase RsmG family.

The protein localises to the cytoplasm. Its function is as follows. Specifically methylates the N7 position of a guanine in 16S rRNA. This chain is Ribosomal RNA small subunit methyltransferase G, found in Clostridium tetani (strain Massachusetts / E88).